A 515-amino-acid chain; its full sequence is NADH-quinone oxidoreductase subunit N (515 aa).

Transmembrane regions (helical) follow at residues 14-34, 40-60, 80-100, 138-158, 160-180, 195-215, 239-259, 271-291, 307-327, 333-353, 361-381, 404-424, 438-458, and 485-505; these read ITPILVILGAACLGVLVEAFL, WSAQVGLSLLALVAAGVALAL, APTLFLWGTLLALGLGAILLI, TEVFPLALFALGGMMVFCAAN, LLTMFIALEVLSLPLYLMCGL, YFLLGAFASAFFLYGLALLYG, LFAGLGLLVVGLLFKASVGPF, PTAVTGFMAACTKVAAFGGIL, GVLYAVAIVSMAIGVVLGLTQ, MIAYSSVAHAGFLLVGSIALT, MFYLLAYGFTTIAIFGVISLV, VAWVFTFLLLALAGIPMTSGF, GMAPLVVVALVASAVAAFFYL, and AAITLGVVVTLLLGVLPSLAL.

Belongs to the complex I subunit 2 family. As to quaternary structure, NDH-1 is composed of 14 different subunits. Subunits NuoA, H, J, K, L, M, N constitute the membrane sector of the complex.

The protein localises to the cell membrane. It catalyses the reaction a quinone + NADH + 5 H(+)(in) = a quinol + NAD(+) + 4 H(+)(out). Its function is as follows. NDH-1 shuttles electrons from NADH, via FMN and iron-sulfur (Fe-S) centers, to quinones in the respiratory chain. The immediate electron acceptor for the enzyme in this species is believed to be a menaquinone. Couples the redox reaction to proton translocation (for every two electrons transferred, four hydrogen ions are translocated across the cytoplasmic membrane), and thus conserves the redox energy in a proton gradient. This chain is NADH-quinone oxidoreductase subunit N, found in Saccharopolyspora erythraea (strain ATCC 11635 / DSM 40517 / JCM 4748 / NBRC 13426 / NCIMB 8594 / NRRL 2338).